Reading from the N-terminus, the 1671-residue chain is DENN domain-containing protein Crag (1671 aa).

The region spanning 39–195 (IEPITDIGVY…DVYLCYKKSM (157 aa)) is the MABP domain. A uDENN domain is found at 187-364 (VYLCYKKSMY…DEVPFPAPSI (178 aa)). One can recognise a cDENN domain in the interval 385 to 521 (PLPRSGAGFH…AARLLRQTLT (137 aa)). One can recognise a dDENN domain in the interval 523-632 (LENAKPISYD…ERSFVSDGDH (110 aa)). Disordered regions lie at residues 997–1160 (QQQQ…PVAS), 1245–1311 (ANST…RLSE), and 1415–1435 (VEESEQSDPLQDGKEQIANGN). Acidic residues-rich tracts occupy residues 1011 to 1023 (GDDDDEDEDEDEY) and 1050 to 1061 (YEADEEDEDEVD). The span at 1072 to 1089 (RVQSPTKISPRTPVTQND) shows a compositional bias: polar residues. A compositionally biased stretch (low complexity) spans 1100–1119 (AASATPTQETQQEQQHSQSQ). The span at 1136 to 1147 (RSATFDESTQIG) shows a compositional bias: polar residues. The span at 1254–1277 (NGHHPHGLHHGHHHPHHHHHHHSQ) shows a compositional bias: basic residues. A compositionally biased stretch (basic and acidic residues) spans 1281–1301 (AEQEEHDAAVHEEGKLRRVSS).

In terms of assembly, interacts with Cam. Interacts with Rab10. Interacts (via the DENN domains) with Rab11. Expressed in the adult head and body.

The protein localises to the cytoplasm. The protein resides in the cell cortex. It localises to the early endosome. It is found in the recycling endosome. Its subcellular location is the cytoplasmic granule. Calmodulin-binding protein that acts as a guanine exchange factor for Rab10 and Rab11. Essential for maintenance of adult photoreceptor cells. Upon light stimulation, required for trafficking of newly synthesized ninaE (Rh1) from the trans-Golgi network to rhabdomere membranes via Rab11-dependent vesicular transport. During egg development, essential for establishing and maintaining epithelial cell polarity by regulating the correct polarized deposition of basal membrane (BM) proteins in follicular epithelial (FE) cells. Functions by targeting Rab10 to the basal cytoplasm, where it restricts the secretion of BM proteins such as trol/Pcan and vkg/Coll IV to the basal surface. Appears to be involved in regulating the levels and distribution of the guanine nucleotide exchange factor strat, however the two proteins appear to have independent roles in regulating polarized BM protein secretion in the FE. The protein is DENN domain-containing protein Crag of Drosophila melanogaster (Fruit fly).